A 171-amino-acid polypeptide reads, in one-letter code: 3-hydroxydecanoyl-[acyl-carrier-protein] dehydratase (171 aa).

His70 is a catalytic residue.

It belongs to the thioester dehydratase family. FabA subfamily. As to quaternary structure, homodimer.

The protein localises to the cytoplasm. The enzyme catalyses a (3R)-hydroxyacyl-[ACP] = a (2E)-enoyl-[ACP] + H2O. It catalyses the reaction (3R)-hydroxydecanoyl-[ACP] = (2E)-decenoyl-[ACP] + H2O. The catalysed reaction is (2E)-decenoyl-[ACP] = (3Z)-decenoyl-[ACP]. It functions in the pathway lipid metabolism; fatty acid biosynthesis. Necessary for the introduction of cis unsaturation into fatty acids. Catalyzes the dehydration of (3R)-3-hydroxydecanoyl-ACP to E-(2)-decenoyl-ACP and then its isomerization to Z-(3)-decenoyl-ACP. Can catalyze the dehydratase reaction for beta-hydroxyacyl-ACPs with saturated chain lengths up to 16:0, being most active on intermediate chain length. This Pseudomonas syringae pv. syringae (strain B728a) protein is 3-hydroxydecanoyl-[acyl-carrier-protein] dehydratase.